The sequence spans 134 residues: Interleukin-4 (134 aa).

The signal sequence occupies residues 1-23; the sequence is MGLTYQLLPALVCLLACTSFIQG. Disulfide bonds link Cys-24–Cys-133 and Cys-48–Cys-88. The N-linked (GlcNAc...) asparagine glycan is linked to Asn-38. Asn-101 carries N-linked (GlcNAc...) asparagine glycosylation.

This sequence belongs to the IL-4/IL-13 family.

The protein localises to the secreted. Functionally, participates in at least several B-cell activation processes as well as of other cell types. It is a costimulator of DNA-synthesis. It induces the expression of class II MHC molecules on resting B-cells. It enhances both secretion and cell surface expression of IgE and IgG1. It also regulates the expression of the low affinity Fc receptor for IgE (CD23) on both lymphocytes and monocytes. Positively regulates IL31RA expression in macrophages. Stimulates autophagy in dendritic cells by interfering with mTORC1 signaling and through the induction of RUFY4. In Equus caballus (Horse), this protein is Interleukin-4 (IL4).